The following is a 169-amino-acid chain: Disulfide bond formation protein B (169 aa).

Residues 1–14 are Cytoplasmic-facing; sequence MMRFLNHCSQGRSA. The helical transmembrane segment at 15-31 threads the bilayer; the sequence is WLLMILTALILESSALY. Topologically, residues 32–49 are periplasmic; sequence FQHVMKLQPCVMCIYERV. Residues Cys-41 and Cys-44 are joined by a disulfide bond. The chain crosses the membrane as a helical span at residues 50–65; that stretch reads ALFGVLSAGILGVIAP. Over 66-71 the chain is Cytoplasmic; the sequence is KTPLRW. The helical transmembrane segment at 72-89 threads the bilayer; that stretch reads LAIILWIYSAWGGLQLAW. The Periplasmic segment spans residues 90 to 144; sequence QHTMMQLHPSPFNTCDFFVNFPSWLALNQWLPSVFEATGDCSVRQWQFLTLEMPQ. A disulfide bridge connects residues Cys-104 and Cys-130. A helical membrane pass occupies residues 145–163; sequence WLVGIFAAYLVVAALVLIS. Over 164–169 the chain is Cytoplasmic; it reads QFFSRK.

Belongs to the DsbB family.

Its subcellular location is the cell inner membrane. Its function is as follows. Required for disulfide bond formation in some periplasmic proteins. Acts by oxidizing the DsbA protein. The polypeptide is Disulfide bond formation protein B (Photorhabdus laumondii subsp. laumondii (strain DSM 15139 / CIP 105565 / TT01) (Photorhabdus luminescens subsp. laumondii)).